The sequence spans 400 residues: Probable phospho-2-dehydro-3-deoxyheptonate aldolase (400 aa).

It belongs to the class-II DAHP synthase family.

It catalyses the reaction D-erythrose 4-phosphate + phosphoenolpyruvate + H2O = 7-phospho-2-dehydro-3-deoxy-D-arabino-heptonate + phosphate. It participates in antibiotic biosynthesis; phenazine biosynthesis. This chain is Probable phospho-2-dehydro-3-deoxyheptonate aldolase (phzC), found in Pseudomonas fluorescens.